The following is a 297-amino-acid chain: Bifunctional protein FolD (297 aa).

NADP(+) is bound by residues 167–169 (GRS), S192, and I233.

It belongs to the tetrahydrofolate dehydrogenase/cyclohydrolase family. Homodimer.

It carries out the reaction (6R)-5,10-methylene-5,6,7,8-tetrahydrofolate + NADP(+) = (6R)-5,10-methenyltetrahydrofolate + NADPH. The enzyme catalyses (6R)-5,10-methenyltetrahydrofolate + H2O = (6R)-10-formyltetrahydrofolate + H(+). It participates in one-carbon metabolism; tetrahydrofolate interconversion. In terms of biological role, catalyzes the oxidation of 5,10-methylenetetrahydrofolate to 5,10-methenyltetrahydrofolate and then the hydrolysis of 5,10-methenyltetrahydrofolate to 10-formyltetrahydrofolate. The protein is Bifunctional protein FolD of Caulobacter vibrioides (strain ATCC 19089 / CIP 103742 / CB 15) (Caulobacter crescentus).